The primary structure comprises 257 residues: Capsid protein (257 aa).

The short motif at lysine 3 to lysine 20 is the Bipartite nuclear localization signal element. Positions lysine 40–arginine 54 match the Nuclear localization signal motif. The segment at cysteine 68–histidine 85 is a zinc-finger region. A Nuclear export signal motif is present at residues isoleucine 101–methionine 122. A Bipartite nuclear localization signal motif is present at residues lysine 201 to arginine 248.

This sequence belongs to the geminiviridae capsid protein family. Homomultimer. Binds to single-stranded and double-stranded viral DNA. Interacts (via nuclear localization signals) with host importin alpha-1a.

The protein localises to the virion. Its subcellular location is the host nucleus. Encapsidates the viral genome into characteristic twinned ('geminate') particles. Binds the genomic viral ssDNA and shuttles it into and out of the cell nucleus. Plays a role in protection of the genome from degradation, virus acquisition and transmission by insect vectors, infectivity, and systemic movement. The CP of monopartite geminiviruses is absolutely essential for virus movement. In Tomato yellow leaf curl Sardinia virus (isolate Spain-1) (TYLCSV), this protein is Capsid protein.